Reading from the N-terminus, the 307-residue chain is Lipoyl synthase (307 aa).

7 residues coordinate [4Fe-4S] cluster: Cys-55, Cys-60, Cys-66, Cys-81, Cys-85, Cys-88, and Ser-292. Positions 67–281 constitute a Radical SAM core domain; it reads WEDREATFLI…ARHAEELGFS (215 aa).

The protein belongs to the radical SAM superfamily. Lipoyl synthase family. [4Fe-4S] cluster serves as cofactor.

The protein resides in the cytoplasm. It catalyses the reaction [[Fe-S] cluster scaffold protein carrying a second [4Fe-4S](2+) cluster] + N(6)-octanoyl-L-lysyl-[protein] + 2 oxidized [2Fe-2S]-[ferredoxin] + 2 S-adenosyl-L-methionine + 4 H(+) = [[Fe-S] cluster scaffold protein] + N(6)-[(R)-dihydrolipoyl]-L-lysyl-[protein] + 4 Fe(3+) + 2 hydrogen sulfide + 2 5'-deoxyadenosine + 2 L-methionine + 2 reduced [2Fe-2S]-[ferredoxin]. It functions in the pathway protein modification; protein lipoylation via endogenous pathway; protein N(6)-(lipoyl)lysine from octanoyl-[acyl-carrier-protein]: step 2/2. Its function is as follows. Catalyzes the radical-mediated insertion of two sulfur atoms into the C-6 and C-8 positions of the octanoyl moiety bound to the lipoyl domains of lipoate-dependent enzymes, thereby converting the octanoylated domains into lipoylated derivatives. The protein is Lipoyl synthase of Mycobacterium avium (strain 104).